Consider the following 474-residue polypeptide: Neuronal acetylcholine receptor subunit eat-2 (474 aa).

The signal sequence occupies residues 1–21 (MTLKIAFFTLILLVSIERVYS). The Extracellular segment spans residues 22-237 (SDEEYRLLKD…MHLKRRTMYY (216 aa)). N-linked (GlcNAc...) asparagine glycosylation occurs at asparagine 95. Cysteine 149 and cysteine 163 are disulfide-bonded. A run of 3 helical transmembrane segments spans residues 238 to 258 (GLNW…GFTM), 266 to 286 (ITLQ…VSEV), and 303 to 323 (LSIV…NIFF). At 324-440 (RHPKTHRMGD…WRFMAMVIDR (117 aa)) the chain is on the cytoplasmic side. Positions 359–378 (PRREEEKNDEEAGGDGTKLL) are disordered. Residues 441 to 461 (LSLFLFTGLIFGTTALIFAFC) form a helical membrane-spanning segment.

This sequence belongs to the ligand-gated ion channel (TC 1.A.9) family. Acetylcholine receptor (TC 1.A.9.1) subfamily. In terms of assembly, neuronal AChR seems to be composed of two different type of subunits: alpha and beta. As to expression, expressed in pharyngeal muscle.

The protein resides in the postsynaptic cell membrane. It localises to the cell membrane. Functionally, after binding acetylcholine, the AChR responds by an extensive change in conformation that affects all subunits and leads to opening of an ion-conducting channel across the plasma membrane. Nicotinic acetylcholine receptor in the MC pharyngeal motor neuron involved in pharyngeal pumping. Has a role in the determination of life span possibly via calorific restriction which affects growth rate, although this is independent of metabolic activity. Plays a role in the defense against the accumulation of ingested live pathogenic bacteria in the intestine. The protein is Neuronal acetylcholine receptor subunit eat-2 of Caenorhabditis elegans.